A 358-amino-acid polypeptide reads, in one-letter code: Phenylalanine--tRNA ligase alpha subunit (358 aa).

Glutamate 262 contacts Mg(2+).

Belongs to the class-II aminoacyl-tRNA synthetase family. Phe-tRNA synthetase alpha subunit type 1 subfamily. Tetramer of two alpha and two beta subunits. Requires Mg(2+) as cofactor.

It localises to the cytoplasm. The catalysed reaction is tRNA(Phe) + L-phenylalanine + ATP = L-phenylalanyl-tRNA(Phe) + AMP + diphosphate + H(+). This chain is Phenylalanine--tRNA ligase alpha subunit (pheS), found in Streptomyces coelicolor (strain ATCC BAA-471 / A3(2) / M145).